A 247-amino-acid polypeptide reads, in one-letter code: Adenosylcobinamide-GDP ribazoletransferase (247 aa).

Transmembrane regions (helical) follow at residues 34-54 (IITFPLIGLLLGAISGLVFMA), 59-79 (FGVPLAALFSVLVLALMTGGF), 113-133 (GGLALIFVVLAKILVLSELAL), 138-158 (ILASLAAACAVSRGTAALLMY), and 194-214 (VLLPGMHGVAAMVVTMVAIFI).

This sequence belongs to the CobS family. The cofactor is Mg(2+).

Its subcellular location is the cell inner membrane. The enzyme catalyses alpha-ribazole + adenosylcob(III)inamide-GDP = adenosylcob(III)alamin + GMP + H(+). It catalyses the reaction alpha-ribazole 5'-phosphate + adenosylcob(III)inamide-GDP = adenosylcob(III)alamin 5'-phosphate + GMP + H(+). Its pathway is cofactor biosynthesis; adenosylcobalamin biosynthesis; adenosylcobalamin from cob(II)yrinate a,c-diamide: step 7/7. In terms of biological role, joins adenosylcobinamide-GDP and alpha-ribazole to generate adenosylcobalamin (Ado-cobalamin). Also synthesizes adenosylcobalamin 5'-phosphate from adenosylcobinamide-GDP and alpha-ribazole 5'-phosphate. The polypeptide is Adenosylcobinamide-GDP ribazoletransferase (Escherichia coli O17:K52:H18 (strain UMN026 / ExPEC)).